A 318-amino-acid chain; its full sequence is Ankyrin repeat domain-containing protein 1 (318 aa).

Residues 37–77 (ALEKQEDLKTTSKSLIELEEEKQIKEKQLKSELLKKKLEER) are a coiled coil. 6 ANK repeats span residues 118-147 (VDQTTFFKAALDNKMPVIEKYLADGGDPNT), 151-180 (YKRTALHRACSEGHTDMVEKLIEAGANIEF), 184-213 (LESTALHWTCRGGSVETLKLLLNKGAAINA), 217-246 (LLSTPLHVAVRTGHYECAEHLIACEADLHA), 250-279 (EGDTPMHDGVRLNRYKMMRLLILYGVDLNI), and 283-314 (AGKTPMELVMQWQNGAKEIFNGLQSKSYKNSH).

The protein localises to the nucleus. May act as a nuclear transcription factor that negatively regulates the expression of cardiac genes. The chain is Ankyrin repeat domain-containing protein 1 (ankrd1) from Xenopus tropicalis (Western clawed frog).